Consider the following 800-residue polypeptide: Protocadherin beta-10 (800 aa).

The N-terminal stretch at 1–26 (MAVRELCFPRQRQVLFLFLFWGVSLA) is a signal peptide. The Extracellular portion of the chain corresponds to 27 to 692 (GSGFGRYSVT…AEADLLTVYL (666 aa)). Cadherin domains lie at 35-133 (VTEE…APVF), 138-242 (TVLK…APQF), 247-347 (YETQ…PPEL), 352-451 (FSNS…APAF), and 456-561 (YTLF…SPFV). N-linked (GlcNAc...) asparagine glycans are attached at residues Asn-169 and Asn-181. 2 N-linked (GlcNAc...) asparagine glycosylation sites follow: Asn-418 and Asn-436. N-linked (GlcNAc...) asparagine glycosylation occurs at Asn-567. Residues 568-671 (GSAPCTELVP…LVDGFSQPYL (104 aa)) enclose the Cadherin 6 domain. Residues 693–713 (VVALASVSSLFLLSVLLFVAV) traverse the membrane as a helical segment. Residues 714 to 800 (RLCRRSRAAS…FRNSFGFNIQ (87 aa)) lie on the Cytoplasmic side of the membrane.

The protein resides in the cell membrane. Potential calcium-dependent cell-adhesion protein. May be involved in the establishment and maintenance of specific neuronal connections in the brain. The chain is Protocadherin beta-10 (PCDHB10) from Homo sapiens (Human).